The chain runs to 274 residues: MEALRQRIEAAFEARADITPSTVDANVRSDVQHVINMLDKGEVRVAEKIDGQWHVHQWLKKAVLLSFRIFDNAVIDGAETKYFDKVPLKFAEYDEARFKAEAIRVVPSATVRKGSFIGKNTVLMPSYVNLGAYVDEGTMVDTWATVGSCAQIGKNVHLSGGVGIGGVLEPLQAGPTIIEDNCFIGARSEIVEGVVVEEGSVISMGVYIGQSTRIYDRETGEVHYGRVPAGSVVVSGNLPSACGKYSLYAAIIVKKVDAKTRGKVGINELLRIVD.

Residues R104 and D141 each contribute to the substrate site.

Belongs to the transferase hexapeptide repeat family. As to quaternary structure, homotrimer.

The protein localises to the cytoplasm. The enzyme catalyses (S)-2,3,4,5-tetrahydrodipicolinate + succinyl-CoA + H2O = (S)-2-succinylamino-6-oxoheptanedioate + CoA. The protein operates within amino-acid biosynthesis; L-lysine biosynthesis via DAP pathway; LL-2,6-diaminopimelate from (S)-tetrahydrodipicolinate (succinylase route): step 1/3. The polypeptide is 2,3,4,5-tetrahydropyridine-2,6-dicarboxylate N-succinyltransferase (Shewanella putrefaciens (strain CN-32 / ATCC BAA-453)).